Reading from the N-terminus, the 300-residue chain is Protoheme IX farnesyltransferase 1 (300 aa).

8 consecutive transmembrane segments (helical) span residues 26-46 (VVVL…RAGV), 48-68 (WTVL…AAAV), 97-117 (AALA…LTFT), 120-140 (LTAW…TGFL), 148-168 (IVIG…AATG), 174-194 (PLLL…ALAI), 226-246 (FALL…VLYL), and 280-300 (IYYL…LLNL).

The protein belongs to the UbiA prenyltransferase family. Protoheme IX farnesyltransferase subfamily.

The protein localises to the cell inner membrane. It catalyses the reaction heme b + (2E,6E)-farnesyl diphosphate + H2O = Fe(II)-heme o + diphosphate. It participates in porphyrin-containing compound metabolism; heme O biosynthesis; heme O from protoheme: step 1/1. Functionally, converts heme B (protoheme IX) to heme O by substitution of the vinyl group on carbon 2 of heme B porphyrin ring with a hydroxyethyl farnesyl side group. This Pseudomonas fluorescens (strain ATCC BAA-477 / NRRL B-23932 / Pf-5) protein is Protoheme IX farnesyltransferase 1.